A 360-amino-acid chain; its full sequence is Putative MSV199 domain-containing protein 212L (360 aa).

A coiled-coil region spans residues phenylalanine 173–glycine 243.

This Acheta domesticus (House cricket) protein is Putative MSV199 domain-containing protein 212L.